A 256-amino-acid chain; its full sequence is Protein crossbronx-like (256 aa).

The UBC core domain occupies 17–179; sequence NQGYKVLAEY…AKVSILWSCQ (163 aa).

It belongs to the ubiquitin-conjugating enzyme family. FTS subfamily.

In Drosophila virilis (Fruit fly), this protein is Protein crossbronx-like.